The following is a 144-amino-acid chain: uncharacterized protein (144 aa).

The HIT domain maps to 13 to 120 (IFCGIVEGNV…VPKYETGLGF (108 aa)). The short motif at 105-109 (HYHMH) is the Histidine triad motif element.

This is an uncharacterized protein from Mycoplasma pneumoniae (strain ATCC 29342 / M129 / Subtype 1) (Mycoplasmoides pneumoniae).